The primary structure comprises 180 residues: Outer-membrane lipoprotein LolB (180 aa).

The signal sequence occupies residues 1–16 (MIRRVLLLSLALLLAG). C17 carries N-palmitoyl cysteine lipidation. A lipid anchor (S-diacylglycerol cysteine) is attached at C17.

This sequence belongs to the LolB family. Monomer.

It localises to the cell outer membrane. Its function is as follows. Plays a critical role in the incorporation of lipoproteins in the outer membrane after they are released by the LolA protein. The polypeptide is Outer-membrane lipoprotein LolB (Chromobacterium violaceum (strain ATCC 12472 / DSM 30191 / JCM 1249 / CCUG 213 / NBRC 12614 / NCIMB 9131 / NCTC 9757 / MK)).